A 1014-amino-acid chain; its full sequence is Poly [ADP-ribose] polymerase 1 (1014 aa).

Position 2 is an N-acetylalanine (alanine 2). The PARP-type 1 zinc-finger motif lies at 9-93 (YRVEYAKSGR…KVKKTAEAGG (85 aa)). 2 residues coordinate Zn(2+): cysteine 21 and cysteine 24. Residue serine 41 is modified to Phosphoserine. Positions 53 and 56 each coordinate Zn(2+). N6-acetyllysine occurs at positions 97 and 105. Residues 113-203 (FAAEYAKSNR…ALKKQLPGVK (91 aa)) form a PARP-type 2 zinc finger. Residues cysteine 125 and cysteine 128 each contribute to the Zn(2+) site. Lysine 131 carries the N6-acetyllysine modification. The Zn(2+) site is built by histidine 159 and cysteine 162. Phosphoserine occurs at positions 177, 179, and 185. Residue lysine 192 forms a Glycyl lysine isopeptide (Lys-Gly) (interchain with G-Cter in SUMO2) linkage. Residues 198-233 (QLPGVKSEGKRKGDEVDGVDEVAKKKSKKEKDKDSK) are disordered. Lysine 203 is covalently cross-linked (Glycyl lysine isopeptide (Lys-Gly) (interchain with G-Cter in SUMO1); alternate). Residue lysine 203 forms a Glycyl lysine isopeptide (Lys-Gly) (interchain with G-Cter in SUMO2); alternate linkage. Over residues 204–233 (SEGKRKGDEVDGVDEVAKKKSKKEKDKDSK) the composition is skewed to basic and acidic residues. 2 consecutive short sequence motifs (nuclear localization signal) follow at residues 207 to 209 (KRK) and 221 to 226 (KKKSKK). The region spanning 225–359 (KKEKDKDSKL…VKKQDRIFPP (135 aa)) is the PADR1 zinc-binding domain. A Glycyl lysine isopeptide (Lys-Gly) (interchain with G-Cter in SUMO2) cross-link involves residue lysine 249. Phosphoserine is present on residues serine 274 and serine 277. The zinc ribbon stretch occupies residues 290–332 (GALLPCEECSGQLVFKSDAYYCTGDVTAWTKCMVKTQTPNRKE). Residues cysteine 295, cysteine 298, cysteine 311, and cysteine 321 each contribute to the Zn(2+) site. Positions 361 to 385 (TSASVAATPPPSTASAPAAVNSSAS) are disordered. Residue serine 364 is modified to Phosphoserine. The residue at position 368 (threonine 368) is a Phosphothreonine. The interval 373 to 524 (TASAPAAVNS…GINKSEKRMK (152 aa)) is automodification domain. The 92-residue stretch at 385 to 476 (SADKPLSNMK…KSLQELFLAH (92 aa)) folds into the BRCT domain. Aspartate 387 is subject to PolyADP-ribosyl aspartic acid. 8 positions are modified to polyADP-ribosyl glutamic acid: glutamate 407, glutamate 413, glutamate 435, glutamate 437, glutamate 444, glutamate 445, glutamate 448, and glutamate 456. Lysine 467 participates in a covalent cross-link: Glycyl lysine isopeptide (Lys-Gly) (interchain with G-Cter in SUMO2). A polyADP-ribosyl glutamic acid mark is found at glutamate 471 and glutamate 484. A Glycyl lysine isopeptide (Lys-Gly) (interchain with G-Cter in SUMO1); alternate cross-link involves residue lysine 486. Lysine 486 participates in a covalent cross-link: Glycyl lysine isopeptide (Lys-Gly) (interchain with G-Cter in SUMO2); alternate. A polyADP-ribosyl glutamic acid mark is found at glutamate 488 and glutamate 491. Serine 499, serine 504, and serine 507 each carry ADP-ribosylserine. Lysine 512 is covalently cross-linked (Glycyl lysine isopeptide (Lys-Gly) (interchain with G-Cter in SUMO2)). 2 positions are modified to polyADP-ribosyl glutamic acid: glutamate 513 and glutamate 514. An ADP-ribosylserine modification is found at serine 519. Position 520 is a polyADP-ribosyl glutamic acid (glutamate 520). Residue lysine 521 is modified to N6-(ADP-ribosyl)lysine. Lysine 528 participates in a covalent cross-link: Glycyl lysine isopeptide (Lys-Gly) (interchain with G-Cter in SUMO2). In terms of domain architecture, WGR spans 542-638 (SAHVLEKGGK…KNFTKYPKKF (97 aa)). At threonine 594 the chain carries Phosphothreonine; by PRKDC. An N6-acetyllysine mark is found at lysine 600 and lysine 621. The PARP alpha-helical domain occupies 662-779 (KSKLPKPVQD…DIEVAYSLLR (118 aa)). A Glycyl lysine isopeptide (Lys-Gly) (interchain with G-Cter in SUMO1); alternate cross-link involves residue lysine 748. Lysine 748 participates in a covalent cross-link: Glycyl lysine isopeptide (Lys-Gly) (interchain with G-Cter in SUMO2); alternate. A phosphoserine mark is found at serine 782 and serine 786. The PARP catalytic domain maps to 788–1014 (DPIDVNYEKL…LKFNFKTSLW (227 aa)). Residues 862–864 (HGS), glycine 871, arginine 878, and serine 904 contribute to the NAD(+) site. Glutamate 988 acts as the For poly [ADP-ribose] polymerase activity in catalysis.

Belongs to the ARTD/PARP family. Homodimer; PARP-type zinc-fingers from separate PARP1 molecules form a dimer module that specifically recognizes DNA strand breaks. Heterodimer; heterodimerizes with PARP2. Interacts (via the PARP catalytic domain) with HPF1. Interacts with NMNAT1. Interacts with nucleosomes; with a preference for nucleosomes containing H2A.X. Interacts with APTX. Component of a base excision repair (BER) complex, containing at least XRCC1, PARP1, PARP2, POLB and LRIG3. Interacts with SRY. The SWAP complex consists of NPM1, NCL, PARP1 and SWAP70. Interacts with TIAM2. Interacts with PARP3; leading to activate PARP1 in absence of DNA. Interacts (when poly-ADP-ribosylated) with CHD1L (via macro domain). Interacts with the DNA polymerase alpha catalytic subunit POLA1; this interaction functions as part of the control of replication fork progression. Interacts with EEF1A1 and TXK. Interacts with RNF4. Interacts with RNF146. Interacts with ZNF423. Interacts with APLF. Interacts with SNAI1 (via zinc fingers); the interaction requires SNAI1 to be poly-ADP-ribosylated and non-phosphorylated (active) by GSK3B. Interacts (when poly-ADP-ribosylated) with PARP9. Interacts with NR4A3; activates PARP1 by improving acetylation of PARP1 and suppressing the interaction between PARP1 and SIRT1. Interacts (via catalytic domain) with PUM3; the interaction inhibits the poly-ADP-ribosylation activity of PARP1 and the degradation of PARP1 by CASP3 following genotoxic stress. Interacts with ZNF365. Interacts with RRP1B. Interacts with TIMELESS; the interaction is direct. Interacts with CGAS; leading to impede the formation of the PARP1-TIMELESS complex. Interacts with KHDC3L, the interaction is increased following the formation of DNA double-strand breaks. Interacts (when auto-poly-ADP-ribosylated) with XRCC1; leading to inhibit PARP1 ADP-ribosyltransferase activity. Interacts with SPINDOC; promoting PARP1 ADP-ribosyltransferase activity. Interacts with BANF1; leading to inhibit PARP1 ADP-ribosyltransferase activity in response to oxidative DNA damage. Interacts (when sumoylated and ubiquitinated) with VCP/p97; leading to its extraction from chromatin. Interacts with YARS1; Interacts with PACMP micropeptide; interaction. Interacts with PACMP micropeptide; Interacts with PACMP micropeptide; interaction. Interacts (when poly-ADP-ribosylated) with isoform 1 of MACROH2A1; MACROH2A1 specifically binds to poly-ADP-ribose chains and inhibits PARP1 activity, limiting the consumption of nuclear NAD(+). Interacts with CARM1; promoting recruitment to replication forks. Interacts with RECQL. Interacts with ZNF32; the interaction reshapes ZNF432 interacting proteins. Interacts with TPRN; TPRN interacts with a number of DNA damage response proteins, is recruited to sites of DNA damage and may play a role in DNA damage repair. In terms of assembly, interacts (when auto-poly-ADP-ribosylated) with AIFM1. As to quaternary structure, (Microbial infection) Interacts with human herpesvirus 8 (KSHV) protein RTA/ORF50; this interaction negatively regulates RTA/ORF50 transactivation activity. In terms of processing, poly-ADP-ribosylated on serine, glutamate and aspartate residues by autocatalysis. Auto-ADP-ribosylation on serine takes place following interaction with HPF1. Auto poly-ADP-ribosylation on serine residues promotes its dissociation from chromatin. Poly-ADP-ribosylated by PARP2; poly-ADP-ribosylation mediates the recruitment of CHD1L to DNA damage sites. Mono-ADP-ribosylated at Lys-521 by SIRT6 in response to oxidative stress, promoting recruitment to double-strand breaks (DSBs) sites. Phosphorylated at Thr-594 by PRKDC in response to DNA damage following virus infection, promoting its translocation to the cytosol. Phosphorylated by TXK. Post-translationally, S-nitrosylated, leading to inhibit transcription regulation activity. In terms of processing, proteolytically cleaved by caspase-3 (CASP3) and caspase-7 (CASP7) in response to apoptosis to generate the Poly [ADP-ribose] polymerase 1, processed N-terminus and Poly [ADP-ribose] polymerase 1, processed C-terminus forms. CASP3-mediated cleavage is promoted by the TP53/p53-induced long non-coding RNA SPARCLE, which binds PARP1 in response to genotoxic stress. Sumoylated with SUMO1 or SUMO2 by PIAS4 following prolonged residence (trapping) to chromatin. Sumoylation promotes ubiquitination by RNF4 and removal from chromatin by VCP/p97. Post-translationally, ubiquitinated by RNF4 following sumoylation by PIAS4 in response to prolonged residence (trapping) to chromatin. Ubiquitination promotes removal from chromatin by VCP/p97.

The protein localises to the chromosome. It localises to the nucleus. The protein resides in the nucleolus. Its subcellular location is the cytoplasm. It is found in the cytosol. The catalysed reaction is NAD(+) + (ADP-D-ribosyl)n-acceptor = nicotinamide + (ADP-D-ribosyl)n+1-acceptor + H(+).. It catalyses the reaction L-seryl-[protein] + NAD(+) = O-(ADP-D-ribosyl)-L-seryl-[protein] + nicotinamide + H(+). It carries out the reaction L-aspartyl-[protein] + NAD(+) = 4-O-(ADP-D-ribosyl)-L-aspartyl-[protein] + nicotinamide. The enzyme catalyses L-glutamyl-[protein] + NAD(+) = 5-O-(ADP-D-ribosyl)-L-glutamyl-[protein] + nicotinamide. The catalysed reaction is L-tyrosyl-[protein] + NAD(+) = O-(ADP-D-ribosyl)-L-tyrosyl-[protein] + nicotinamide + H(+). It catalyses the reaction L-histidyl-[protein] + NAD(+) = N(tele)-(ADP-D-ribosyl)-L-histidyl-[protein] + nicotinamide + H(+). With respect to regulation, ADP-ribosyltransferase activity is regulated via an allosteric activation mechanism. In absence of activation signal, PARP1 is autoinhibited by the PARP alpha-helical domain (also named HD region), which prevents effective NAD(+)-binding. Activity is highly stimulated by signals, such as DNA strand breaks. Binding to damaged DNA unfolds the PARP alpha-helical domain, relieving autoinhibition. Poly-ADP-ribosyltransferase activity is tightly regulated and PARP1 is removed from damaged chromatin following initial poly-ADP-ribosylation of chromatin to avoid prolonged residence (trapping) that has cytotoxic consequences. A number of factors (VCP/p97) or post-translational modifications (auto-poly-ADP-ribosylation or ubiquitination) promote PARP1 removal from chromatin. ADP-ribosyltransferase activity is inhibited by a number of PARP inhibitors (PARPi) compounds, that are used the treatment of breast or ovarian cancers that have defects in DNA repair by homologous recombination. PARPi molecules can be classified in three categories: type I compounds (EB-47, UKTT15 and BAD) that promote allosteric retention of PARP1 on DNA, type II inhibitors (talazoparib and olaparib) that mediate a non-allosteric inhibition, and type III inhibitors (rucaparib, niraparib, and veliparib) that promote allosteric release from DNA. Trapping to chromatin by PARPi molecules triggers activation of the cGAS-STING pathway. Its function is as follows. Poly-ADP-ribosyltransferase that mediates poly-ADP-ribosylation of proteins and plays a key role in DNA repair. Mediates glutamate, aspartate, serine, histidine or tyrosine ADP-ribosylation of proteins: the ADP-D-ribosyl group of NAD(+) is transferred to the acceptor carboxyl group of target residues and further ADP-ribosyl groups are transferred to the 2'-position of the terminal adenosine moiety, building up a polymer with an average chain length of 20-30 units. Serine ADP-ribosylation of proteins constitutes the primary form of ADP-ribosylation of proteins in response to DNA damage. Specificity for the different amino acids is conferred by interacting factors, such as HPF1 and NMNAT1. Following interaction with HPF1, catalyzes serine ADP-ribosylation of target proteins; HPF1 confers serine specificity by completing the PARP1 active site. Also catalyzes tyrosine ADP-ribosylation of target proteins following interaction with HPF1. Following interaction with NMNAT1, catalyzes glutamate and aspartate ADP-ribosylation of target proteins; NMNAT1 confers glutamate and aspartate specificity. PARP1 initiates the repair of DNA breaks: recognizes and binds DNA breaks within chromatin and recruits HPF1, licensing serine ADP-ribosylation of target proteins, such as histones (H2BS6ADPr and H3S10ADPr), thereby promoting decompaction of chromatin and the recruitment of repair factors leading to the reparation of DNA strand breaks. HPF1 initiates serine ADP-ribosylation but restricts the polymerase activity of PARP1 in order to limit the length of poly-ADP-ribose chains. In addition to base excision repair (BER) pathway, also involved in double-strand breaks (DSBs) repair: together with TIMELESS, accumulates at DNA damage sites and promotes homologous recombination repair by mediating poly-ADP-ribosylation. Mediates the poly-ADP-ribosylation of a number of proteins, including itself, APLF, CHFR, RPA1 and NFAT5. In addition to proteins, also able to ADP-ribosylate DNA: catalyzes ADP-ribosylation of DNA strand break termini containing terminal phosphates and a 2'-OH group in single- and double-stranded DNA, respectively. Required for PARP9 and DTX3L recruitment to DNA damage sites. PARP1-dependent PARP9-DTX3L-mediated ubiquitination promotes the rapid and specific recruitment of 53BP1/TP53BP1, UIMC1/RAP80, and BRCA1 to DNA damage sites. PARP1-mediated DNA repair in neurons plays a role in sleep: senses DNA damage in neurons and promotes sleep, facilitating efficient DNA repair. In addition to DNA repair, also involved in other processes, such as transcription regulation, programmed cell death, membrane repair, adipogenesis and innate immunity. Acts as a repressor of transcription: binds to nucleosomes and modulates chromatin structure in a manner similar to histone H1, thereby altering RNA polymerase II. Acts both as a positive and negative regulator of transcription elongation, depending on the context. Acts as a positive regulator of transcription elongation by mediating poly-ADP-ribosylation of NELFE, preventing RNA-binding activity of NELFE and relieving transcription pausing. Acts as a negative regulator of transcription elongation in response to DNA damage by catalyzing poly-ADP-ribosylation of CCNT1, disrupting the phase separation activity of CCNT1 and subsequent activation of CDK9. Involved in replication fork progression following interaction with CARM1: mediates poly-ADP-ribosylation at replication forks, slowing fork progression. Poly-ADP-ribose chains generated by PARP1 also play a role in poly-ADP-ribose-dependent cell death, a process named parthanatos. Also acts as a negative regulator of the cGAS-STING pathway. Acts by mediating poly-ADP-ribosylation of CGAS: PARP1 translocates into the cytosol following phosphorylation by PRKDC and catalyzes poly-ADP-ribosylation and inactivation of CGAS. Acts as a negative regulator of adipogenesis: catalyzes poly-ADP-ribosylation of histone H2B on 'Glu-35' (H2BE35ADPr) following interaction with NMNAT1, inhibiting phosphorylation of H2B at 'Ser-36' (H2BS36ph), thereby blocking expression of pro-adipogenetic genes. Involved in the synthesis of ATP in the nucleus, together with NMNAT1, PARG and NUDT5. Nuclear ATP generation is required for extensive chromatin remodeling events that are energy-consuming. In terms of biological role, promotes AIFM1-mediated apoptosis. This form, which translocates into the cytoplasm following cleavage by caspase-3 (CASP3) and caspase-7 (CASP7) in response to apoptosis, is auto-poly-ADP-ribosylated and serves as a poly-ADP-ribose carrier to induce AIFM1-mediated apoptosis. Functionally, this cleavage form irreversibly binds to DNA breaks and interferes with DNA repair, promoting DNA damage-induced apoptosis. This Homo sapiens (Human) protein is Poly [ADP-ribose] polymerase 1.